Reading from the N-terminus, the 390-residue chain is Argininosuccinate synthase (390 aa).

ATP is bound at residue 6–14; the sequence is SYSGGLDTT. Residue Tyr83 coordinates L-citrulline. Position 113 (Gly113) interacts with ATP. L-aspartate is bound by residues Thr115, Asn119, and Asp120. Position 119 (Asn119) interacts with L-citrulline. L-citrulline is bound by residues Arg123, Ser169, Ser178, Glu254, and Tyr266.

Belongs to the argininosuccinate synthase family. Type 1 subfamily. Homotetramer.

It localises to the cytoplasm. The catalysed reaction is L-citrulline + L-aspartate + ATP = 2-(N(omega)-L-arginino)succinate + AMP + diphosphate + H(+). Its pathway is amino-acid biosynthesis; L-arginine biosynthesis; L-arginine from L-ornithine and carbamoyl phosphate: step 2/3. In Archaeoglobus fulgidus (strain ATCC 49558 / DSM 4304 / JCM 9628 / NBRC 100126 / VC-16), this protein is Argininosuccinate synthase.